Here is a 561-residue protein sequence, read N- to C-terminus: Lengsin (561 aa).

2 disordered regions span residues 1-78 (MNDE…WHNA) and 91-112 (SLPS…TRDN). Over residues 26–37 (NKLKRTRRKVTK) the composition is skewed to basic residues. Residues 50–63 (MANSREMSRNQTAD) are compositionally biased toward polar residues. Residues 135 to 229 (NHLQFVRFEA…VICDTFTVTG (95 aa)) enclose the GS beta-grasp domain. The GS catalytic domain occupies 236–561 (PRYIAKRQLR…EGNKFLEYFI (326 aa)).

This sequence belongs to the glutamine synthetase family. Dodecamer. Interacts with BFSP2 and VIM. As to expression, expressed in lens.

Functionally, may act as a component of the cytoskeleton or as a chaperone for the reorganization of intermediate filament proteins during terminal differentiation in the lens. Does not seem to have enzymatic activity. The polypeptide is Lengsin (Lgsn) (Rattus norvegicus (Rat)).